Consider the following 502-residue polypeptide: ATP synthase subunit beta (502 aa).

156–163 (GGAGVGKT) is a binding site for ATP.

This sequence belongs to the ATPase alpha/beta chains family. In terms of assembly, F-type ATPases have 2 components, CF(1) - the catalytic core - and CF(0) - the membrane proton channel. CF(1) has five subunits: alpha(3), beta(3), gamma(1), delta(1), epsilon(1). CF(0) has three main subunits: a(1), b(2) and c(9-12). The alpha and beta chains form an alternating ring which encloses part of the gamma chain. CF(1) is attached to CF(0) by a central stalk formed by the gamma and epsilon chains, while a peripheral stalk is formed by the delta and b chains.

Its subcellular location is the cell membrane. The enzyme catalyses ATP + H2O + 4 H(+)(in) = ADP + phosphate + 5 H(+)(out). Functionally, produces ATP from ADP in the presence of a proton gradient across the membrane. The catalytic sites are hosted primarily by the beta subunits. This Cellulophaga lytica (Cytophaga lytica) protein is ATP synthase subunit beta.